The following is a 141-amino-acid chain: VLTAEDKKLIQQTWGKLGGAEEEIGAEALWRMFHAYPPTKTYFPHFDLSQGSDQIRGHGKKVVAALGNAIKNLDNLSQALSELSNLHAYNLRVDPVNFKFLSQCLQVTLATRLGKEYSPEVHSAVDKFMSAVAAVLAEKYR.

Residues 1-141 form the Globin domain; sequence VLTAEDKKLI…VAAVLAEKYR (141 aa). Positions 58 and 87 each coordinate heme b.

It belongs to the globin family. As to quaternary structure, heterotetramer of two alpha-D chains and two beta chains. Red blood cells.

Its function is as follows. Involved in oxygen transport from the lung to the various peripheral tissues. The chain is Hemoglobin subunit alpha-D (HBAD) from Sturnus vulgaris (Starling).